We begin with the raw amino-acid sequence, 485 residues long: Two-component response regulator ORR31 (485 aa).

Residues 13 to 138 (RVMPVDGDTK…TMAQLWRVVA (126 aa)) enclose the Response regulatory domain. Asp-66 carries the 4-aspartylphosphate modification. Residues 195 to 204 (LTINVDSGSS) are compositionally biased toward polar residues. Positions 195–236 (LTINVDSGSSDGADANPRQKLEHKKDAKGPLGQHVASHLQPQ) are disordered. The span at 211–222 (PRQKLEHKKDAK) shows a compositional bias: basic and acidic residues.

The protein belongs to the ARR family. Type-B subfamily. In terms of processing, two-component system major event consists of a His-to-Asp phosphorelay between a sensor histidine kinase (HK) and a response regulator (RR). In plants, the His-to-Asp phosphorelay involves an additional intermediate named Histidine-containing phosphotransfer protein (HPt). This multistep phosphorelay consists of a His-Asp-His-Asp sequential transfer of a phosphate group between first a His and an Asp of the HK protein, followed by the transfer to a conserved His of the HPt protein and finally the transfer to an Asp in the receiver domain of the RR protein.

Functionally, functions as a response regulator involved in His-to-Asp phosphorelay signal transduction system. Phosphorylation of the Asp residue in the receiver domain activates the ability of the protein to promote the transcription of target genes. May directly activate some type-A response regulators in response to cytokinins. The chain is Two-component response regulator ORR31 from Oryza sativa subsp. japonica (Rice).